The following is a 147-amino-acid chain: Basic phospholipase A2 beta-bungarotoxin A4 chain (147 aa).

The N-terminal stretch at Met1 to Ala19 is a signal peptide. Residues Ala20–Leu27 constitute a propeptide that is removed on maturation. Disulfide bonds link Cys54–Cys146, Cys56–Cys72, Cys71–Cys127, Cys78–Cys120, Cys88–Cys113, and Cys106–Cys118. The Ca(2+) site is built by Tyr55, Gly57, and Gly59. His75 is an active-site residue. Position 76 (Asp76) interacts with Ca(2+). Residue Asp121 is part of the active site.

The protein belongs to the phospholipase A2 family. Group I subfamily. D49 sub-subfamily. As to quaternary structure, heterodimer; disulfide-linked. The A chain has phospholipase A2 activity and the B chain shows homology with the basic protease inhibitors. Ca(2+) serves as cofactor. Expressed by the venom gland.

The protein resides in the secreted. It catalyses the reaction a 1,2-diacyl-sn-glycero-3-phosphocholine + H2O = a 1-acyl-sn-glycero-3-phosphocholine + a fatty acid + H(+). Its function is as follows. Snake venom phospholipase A2 (PLA2) that shows presynaptic neurotoxicity. The A chain has phospholipase activity. PLA2 catalyzes the calcium-dependent hydrolysis of the 2-acyl groups in 3-sn-phosphoglycerides. The polypeptide is Basic phospholipase A2 beta-bungarotoxin A4 chain (Bungarus candidus (Malayan krait)).